The chain runs to 357 residues: Protein-glutamate methylesterase/protein-glutamine glutaminase 5 (357 aa).

The region spanning 10–127 (RVLVVDDSSF…IDAQKAFKEE (118 aa)) is the Response regulatory domain. A 4-aspartylphosphate modification is found at D61. Residues 161 to 357 (PRPAGQRYQY…IGTEITKIAG (197 aa)) enclose the CheB-type methylesterase domain. Catalysis depends on residues S176, H203, and D301.

It belongs to the CheB family. Post-translationally, phosphorylated by CheA. Phosphorylation of the N-terminal regulatory domain activates the methylesterase activity.

The protein resides in the cytoplasm. It carries out the reaction [protein]-L-glutamate 5-O-methyl ester + H2O = L-glutamyl-[protein] + methanol + H(+). The catalysed reaction is L-glutaminyl-[protein] + H2O = L-glutamyl-[protein] + NH4(+). Involved in chemotaxis. Part of a chemotaxis signal transduction system that modulates chemotaxis in response to various stimuli. Catalyzes the demethylation of specific methylglutamate residues introduced into the chemoreceptors (methyl-accepting chemotaxis proteins or MCP) by CheR. Also mediates the irreversible deamidation of specific glutamine residues to glutamic acid. This is Protein-glutamate methylesterase/protein-glutamine glutaminase 5 from Geobacter metallireducens (strain ATCC 53774 / DSM 7210 / GS-15).